A 360-amino-acid chain; its full sequence is Type II methyltransferase M2.ScrFI (360 aa).

Residues L2–Q360 enclose the SAM-dependent MTase C5-type domain. C127 is an active-site residue.

Belongs to the class I-like SAM-binding methyltransferase superfamily. C5-methyltransferase family.

The enzyme catalyses a 2'-deoxycytidine in DNA + S-adenosyl-L-methionine = a 5-methyl-2'-deoxycytidine in DNA + S-adenosyl-L-homocysteine + H(+). A methylase, recognizes the double-stranded sequence 5'-CCNGG-3', methylates C-2 on both strands, and protects the DNA from cleavage by the ScrFI endonuclease. The protein is Type II methyltransferase M2.ScrFI (scrFIBM) of Lactococcus lactis subsp. cremoris (Streptococcus cremoris).